Consider the following 417-residue polypeptide: Nucleosome assembly protein (417 aa).

Residues 1–47 (MSDPIRTKPKSSMQIDNAPTPHNTPASVLNPSYLKNGNPVRAQAQEQ) are disordered. Over residues 10 to 35 (KSSMQIDNAPTPHNTPASVLNPSYLK) the composition is skewed to polar residues. Residues Thr-20 and Thr-24 each carry the phosphothreonine modification. Phosphoserine is present on Ser-27. Residue Lys-50 forms a Glycyl lysine isopeptide (Lys-Gly) (interchain with G-Cter in ubiquitin) linkage. The residue at position 53 (Thr-53) is a Phosphothreonine. Phosphoserine is present on residues Ser-69, Ser-76, Ser-82, Ser-98, Ser-104, and Ser-140. Residues 143-362 (EQPKPEQIAK…IPRAVDWFTG (220 aa)) are interaction with NBA1. A phosphoserine; by CK2 mark is found at Ser-159 and Ser-177. The segment at residues 330-356 (LEEDLEERLALDYSIGEQLKDKLIPRA) is a DNA-binding region (H-T-H motif). Positions 364 to 417 (ALEFEFEEDEEEADEDEDEEEDDDHGLEDDDGESAEEQDDFAGRPEQAPECKQS) are disordered. A compositionally biased stretch (acidic residues) spans 367 to 403 (FEFEEDEEEADEDEDEEEDDDHGLEDDDGESAEEQDD). The residue at position 397 (Ser-397) is a Phosphoserine; by CK2. A compositionally biased stretch (basic and acidic residues) spans 404–417 (FAGRPEQAPECKQS).

This sequence belongs to the nucleosome assembly protein (NAP) family. In terms of assembly, component of the GIN4 complex composed of at least BNI5, CDC3, CDC10, CDC11, CDC12, GIN4, NAP1 and SHS1 which forms a ring at the bud neck. Homodimer (in-vitro). Interacts with the B-type cyclin CLB2. Interacts with 60S ribosomal protein L18 (RPL18A or RPL18B), CKA2, CKI1, eukaryotic elongation factor 1 complex eEF1A (TEF1 or TEF2), FOL1, HSC82, HTA2, HTB2, HTZ1, KAP114, KCC4, NIS1, SSA1, SSA2, SSB1, SSC1, SHM1, SIP5 and TCO89. Interacts with NBA1. Interacts with histone H3/H4 heterodimers. Phosphorylation by CK2 is required for normal progression through S phase. CK2 phosphorylation is not required for correct bud formation nor histone binding.

It localises to the cytoplasm. Its subcellular location is the nucleus. It is found in the bud neck. Functionally, acidic protein, which assembles histones into an octamer (in vitro). Involved in the regulation of the localization and the function of the septins during mitosis. Involved in the function of B-type cyclins. The sequence is that of Nucleosome assembly protein from Saccharomyces cerevisiae (strain ATCC 204508 / S288c) (Baker's yeast).